The chain runs to 128 residues: Small ribosomal subunit protein eS6 (128 aa).

This sequence belongs to the eukaryotic ribosomal protein eS6 family.

In Methanobrevibacter smithii (strain ATCC 35061 / DSM 861 / OCM 144 / PS), this protein is Small ribosomal subunit protein eS6.